We begin with the raw amino-acid sequence, 891 residues long: uncharacterized protein (891 aa).

Residues 1-20 form the signal peptide; sequence MKILKSLVLLVLFMAMPAKA. 6 consecutive transmembrane segments (helical) span residues 525-545, 568-588, 614-634, 652-672, 685-705, and 776-796; these read VTIF…VEVI, TYFF…VVGA, LLFI…IITI, VIAF…IILM, ISTL…FLLI, and FLVL…SYSL.

Belongs to the TrbL/VirB6 family.

The protein localises to the cell membrane. This is an uncharacterized protein from Rickettsia conorii (strain ATCC VR-613 / Malish 7).